The following is a 279-amino-acid chain: Tryptophan synthase alpha chain (279 aa).

Residues Glu50 and Asp61 each act as proton acceptor in the active site.

The protein belongs to the TrpA family. As to quaternary structure, tetramer of two alpha and two beta chains.

The catalysed reaction is (1S,2R)-1-C-(indol-3-yl)glycerol 3-phosphate + L-serine = D-glyceraldehyde 3-phosphate + L-tryptophan + H2O. It functions in the pathway amino-acid biosynthesis; L-tryptophan biosynthesis; L-tryptophan from chorismate: step 5/5. In terms of biological role, the alpha subunit is responsible for the aldol cleavage of indoleglycerol phosphate to indole and glyceraldehyde 3-phosphate. This Sinorhizobium fredii (strain NBRC 101917 / NGR234) protein is Tryptophan synthase alpha chain.